A 325-amino-acid chain; its full sequence is ATP phosphoribosyltransferase (325 aa).

This sequence belongs to the ATP phosphoribosyltransferase family. Long subfamily. It depends on Mg(2+) as a cofactor.

The protein resides in the cytoplasm. The catalysed reaction is 1-(5-phospho-beta-D-ribosyl)-ATP + diphosphate = 5-phospho-alpha-D-ribose 1-diphosphate + ATP. Its pathway is amino-acid biosynthesis; L-histidine biosynthesis; L-histidine from 5-phospho-alpha-D-ribose 1-diphosphate: step 1/9. Its activity is regulated as follows. Feedback inhibited by histidine. Its function is as follows. Catalyzes the condensation of ATP and 5-phosphoribose 1-diphosphate to form N'-(5'-phosphoribosyl)-ATP (PR-ATP). Has a crucial role in the pathway because the rate of histidine biosynthesis seems to be controlled primarily by regulation of HisG enzymatic activity. This chain is ATP phosphoribosyltransferase, found in Bradyrhizobium diazoefficiens (strain JCM 10833 / BCRC 13528 / IAM 13628 / NBRC 14792 / USDA 110).